The chain runs to 720 residues: DNA gyrase subunit B (720 aa).

The segment covering 1-26 (MVDAMPENPAEEPTAASAAPNPEAVP) has biased composition (low complexity). The segment at 1 to 42 (MVDAMPENPAEEPTAASAAPNPEAVPDAVGQPEAPVKDRKVP) is disordered. Positions 498–612 (CEVYIVEGDS…AGHVFLAQPP (115 aa)) constitute a Toprim domain. Residues glutamate 504, aspartate 577, and aspartate 579 each coordinate Mg(2+).

The protein belongs to the type II topoisomerase GyrB family. In terms of assembly, heterotetramer, composed of two GyrA and two GyrB chains. In the heterotetramer, GyrA contains the active site tyrosine that forms a transient covalent intermediate with the DNA, while GyrB binds cofactors and catalyzes ATP hydrolysis. Mg(2+) serves as cofactor. The cofactor is Mn(2+). Requires Ca(2+) as cofactor.

Its subcellular location is the cytoplasm. It catalyses the reaction ATP-dependent breakage, passage and rejoining of double-stranded DNA.. With respect to regulation, supercoiling activity inhibited by novobiocin and coumermycin, DNA wrapping around gyrase is not inhibited. In terms of biological role, a type II topoisomerase that negatively supercoils DNA in an ATP-dependent manner. About 140 bp of DNA wraps around gyrase in the presence or absence of ATP, when ATP is added negative supercoils are made. Its function is as follows. A type II topoisomerase that negatively supercoils closed circular double-stranded (ds) DNA in an ATP-dependent manner to modulate DNA topology and maintain chromosomes in an underwound state. Negative supercoiling favors strand separation, and DNA replication, transcription, recombination and repair, all of which involve strand separation. Also able to catalyze the interconversion of other topological isomers of dsDNA rings, including catenanes and knotted rings. Type II topoisomerases break and join 2 DNA strands simultaneously in an ATP-dependent manner. This chain is DNA gyrase subunit B, found in Micrococcus luteus (strain ATCC 4698 / DSM 20030 / JCM 1464 / CCM 169 / CCUG 5858 / IAM 1056 / NBRC 3333 / NCIMB 9278 / NCTC 2665 / VKM Ac-2230) (Micrococcus lysodeikticus).